Reading from the N-terminus, the 142-residue chain is Large ribosomal subunit protein uL13 (142 aa).

The protein belongs to the universal ribosomal protein uL13 family. As to quaternary structure, part of the 50S ribosomal subunit.

Its function is as follows. This protein is one of the early assembly proteins of the 50S ribosomal subunit, although it is not seen to bind rRNA by itself. It is important during the early stages of 50S assembly. This is Large ribosomal subunit protein uL13 from Laribacter hongkongensis (strain HLHK9).